Here is an 815-residue protein sequence, read N- to C-terminus: Subtilisin-like protease SBT2.5 (815 aa).

A signal peptide spans Met-1–Ala-19. An Inhibitor I9 domain is found at Val-21–Arg-124. In terms of domain architecture, Peptidase S8 spans Asp-120–Leu-671. Catalysis depends on charge relay system residues Asp-160 and His-234. The region spanning Thr-397–Tyr-501 is the PA domain. N-linked (GlcNAc...) asparagine glycans are attached at residues Asn-503 and Asn-577. The active-site Charge relay system is the Ser-596. Residue Asn-701 is glycosylated (N-linked (GlcNAc...) asparagine).

This sequence belongs to the peptidase S8 family. Expressed in roots, leaves and flowers of mature plants.

This chain is Subtilisin-like protease SBT2.5, found in Arabidopsis thaliana (Mouse-ear cress).